We begin with the raw amino-acid sequence, 232 residues long: Uracil phosphoribosyltransferase (232 aa).

Position 38-42 (38-42 (KGLVK)) interacts with GTP. 5-phospho-alpha-D-ribose 1-diphosphate-binding positions include arginine 87, arginine 112, and 140–148 (DPMIATGST). Uracil contacts are provided by residues isoleucine 204 and 209-211 (GDA). Aspartate 210 contacts 5-phospho-alpha-D-ribose 1-diphosphate.

This sequence belongs to the UPRTase family. Mg(2+) serves as cofactor.

It catalyses the reaction UMP + diphosphate = 5-phospho-alpha-D-ribose 1-diphosphate + uracil. Its pathway is pyrimidine metabolism; UMP biosynthesis via salvage pathway; UMP from uracil: step 1/1. Allosterically activated by GTP. Functionally, catalyzes the conversion of uracil and 5-phospho-alpha-D-ribose 1-diphosphate (PRPP) to UMP and diphosphate. The protein is Uracil phosphoribosyltransferase of Pyrococcus furiosus (strain ATCC 43587 / DSM 3638 / JCM 8422 / Vc1).